A 126-amino-acid polypeptide reads, in one-letter code: Large ribosomal subunit protein eL14 (126 aa).

Belongs to the eukaryotic ribosomal protein eL14 family.

This Tetrahymena thermophila (strain SB210) protein is Large ribosomal subunit protein eL14 (RPL14).